The sequence spans 463 residues: Ribosomal protein uS12 methylthiotransferase RimO (463 aa).

The 116-residue stretch at 11–126 (PKIGFVSLGC…VMEVVHTHCP (116 aa)) folds into the MTTase N-terminal domain. Cys20, Cys56, Cys85, Cys161, Cys165, and Cys168 together coordinate [4Fe-4S] cluster. A Radical SAM core domain is found at 147–388 (LTPRHYAYLK…MAVAEEVSTA (242 aa)). Residues 391-463 (QRRVGQTMQV…QGHDLVGVPV (73 aa)) form the TRAM domain.

The protein belongs to the methylthiotransferase family. RimO subfamily. Requires [4Fe-4S] cluster as cofactor.

The protein localises to the cytoplasm. It catalyses the reaction L-aspartate(89)-[ribosomal protein uS12]-hydrogen + (sulfur carrier)-SH + AH2 + 2 S-adenosyl-L-methionine = 3-methylsulfanyl-L-aspartate(89)-[ribosomal protein uS12]-hydrogen + (sulfur carrier)-H + 5'-deoxyadenosine + L-methionine + A + S-adenosyl-L-homocysteine + 2 H(+). In terms of biological role, catalyzes the methylthiolation of an aspartic acid residue of ribosomal protein uS12. In Acidovorax sp. (strain JS42), this protein is Ribosomal protein uS12 methylthiotransferase RimO.